Reading from the N-terminus, the 608-residue chain is Dolichyl-diphosphooligosaccharide--protein glycosyltransferase subunit 1 (608 aa).

The signal sequence occupies residues 1-24; that stretch reads MEAPAVCLLPLLLLLWAWAPAPGR. The Lumenal segment spans residues 25–435; sequence ASPEALPLVN…VVHYTFNKVL (411 aa). Lysine 188 is subject to N6-acetyllysine. Asparagine 300 is a glycosylation site (N-linked (GlcNAc...) asparagine). Residues 436–456 form a helical membrane-spanning segment; the sequence is MLQEPLLVVAAFYILFFTVIV. Residues 457–607 are Cytoplasmic-facing; it reads YVRLDFSITK…VTKIDHILDA (151 aa). An N6-acetyllysine; alternate modification is found at lysine 539. Residue lysine 539 forms a Glycyl lysine isopeptide (Lys-Gly) (interchain with G-Cter in SUMO2); alternate linkage.

Belongs to the OST1 family. As to quaternary structure, component of the oligosaccharyltransferase (OST) complex. OST exists in two different complex forms which contain common core subunits RPN1, RPN2, OST48, OST4, DAD1 and TMEM258, either STT3A or STT3B as catalytic subunits, and form-specific accessory subunits. STT3A complex assembly occurs through the formation of 3 subcomplexes. Subcomplex 1 contains RPN1 and TMEM258, subcomplex 2 contains the STT3A-specific subunits STT3A, DC2/OSTC, and KCP2 as well as the core subunit OST4, and subcomplex 3 contains RPN2, DAD1, and OST48. The STT3A complex can form stable complexes with the Sec61 complex or with both the Sec61 and TRAP complexes. Interacts with TMEM35A/NACHO. Post-translationally, ubiquitinated by the ECS(ASB11) complex. In terms of processing, ufmylated by UFL1 in response to endoplasmic reticulum stress, promoting reticulophagy of endoplasmic reticulum sheets. As to expression, detected in liver (at protein level).

Its subcellular location is the endoplasmic reticulum membrane. The protein operates within protein modification; protein glycosylation. Functionally, subunit of the oligosaccharyl transferase (OST) complex that catalyzes the initial transfer of a defined glycan (Glc(3)Man(9)GlcNAc(2) in eukaryotes) from the lipid carrier dolichol-pyrophosphate to an asparagine residue within an Asn-X-Ser/Thr consensus motif in nascent polypeptide chains, the first step in protein N-glycosylation. N-glycosylation occurs cotranslationally and the complex associates with the Sec61 complex at the channel-forming translocon complex that mediates protein translocation across the endoplasmic reticulum (ER). All subunits are required for a maximal enzyme activity. In Sus scrofa (Pig), this protein is Dolichyl-diphosphooligosaccharide--protein glycosyltransferase subunit 1.